The chain runs to 296 residues: MAVNDSVNILNSAYLAVEYIDSFLPDNPLQQPFKNAWNYMLDNYTKFQIATWGSLLVHEASYFLLCVPGFIFQFIPYMQKYKIQPDKPETWEKQWKCFKTLIFNHFFIQLPLICGTYYFTEYFNIPYEWEEMPRWYVLLAQCFGCAVIEDAWHYFLHRLLHHKRIYKYIHKVHHEFVSPFGMQAEYAHPLETLILGAGFFIGIVVFCNHVVLLWAWVICRLMETIDVHSGYDIPLNPLHLVPFYAGARFHDFHHMNFIGNYASTFTWWDRIFGTDSQFIAYKEKEKKQQLRMKKTN.

2 consecutive transmembrane segments (helical) span residues 55-75 and 100-120; these read LLVH…FQFI and TLIF…YYFT. A Fatty acid hydroxylase domain is found at 145–274; that stretch reads CAVIEDAWHY…FTWWDRIFGT (130 aa). The short motif at 157-161 is the Histidine box-1 element; that stretch reads HRLLH. The Histidine box-2 motif lies at 170 to 174; sequence HKVHH. Residues 199–219 traverse the membrane as a helical segment; it reads FFIGIVVFCNHVVLLWAWVIC. The Histidine box-3 motif lies at 249–255; the sequence is FHDFHHM.

Belongs to the sterol desaturase family. Requires Fe cation as cofactor.

The protein localises to the endoplasmic reticulum membrane. The enzyme catalyses 4,4-dimethyl-5alpha-cholest-7-en-3beta-ol + 6 Fe(II)-[cytochrome b5] + 3 O2 + 5 H(+) = 4alpha-carboxy-4beta-methyl-5alpha-cholest-7-ene-3beta-ol + 6 Fe(III)-[cytochrome b5] + 4 H2O. It participates in steroid biosynthesis; zymosterol biosynthesis; zymosterol from lanosterol: step 3/6. Catalyzes the first step in the removal of the two C-4 methyl groups of 4,4-dimethylzymosterol. The chain is Methylsterol monooxygenase 1 (MSMO1) from Gallus gallus (Chicken).